Reading from the N-terminus, the 286-residue chain is 33 kDa chaperonin (286 aa).

Disulfide bonds link C233–C235 and C267–C270.

Belongs to the HSP33 family. In terms of processing, under oxidizing conditions two disulfide bonds are formed involving the reactive cysteines. Under reducing conditions zinc is bound to the reactive cysteines and the protein is inactive.

Its subcellular location is the cytoplasm. Its function is as follows. Redox regulated molecular chaperone. Protects both thermally unfolding and oxidatively damaged proteins from irreversible aggregation. Plays an important role in the bacterial defense system toward oxidative stress. The sequence is that of 33 kDa chaperonin from Histophilus somni (strain 129Pt) (Haemophilus somnus).